A 380-amino-acid polypeptide reads, in one-letter code: Sterol 24-C-methyltransferase ERG6B (380 aa).

The protein belongs to the class I-like SAM-binding methyltransferase superfamily. Erg6/SMT family.

It catalyses the reaction lanosterol + S-adenosyl-L-methionine = eburicol + S-adenosyl-L-homocysteine + H(+). The protein operates within steroid metabolism; ergosterol biosynthesis. Its function is as follows. Sterol 24-C-methyltransferase; part of the third module of ergosterol biosynthesis pathway that includes the late steps of the pathway. ERG6A and ERG6B methylate lanosterol at C-24 to produce eburicol. The third module or late pathway involves the ergosterol synthesis itself through consecutive reactions that mainly occur in the endoplasmic reticulum (ER) membrane. Firstly, the squalene synthase ERG9 catalyzes the condensation of 2 farnesyl pyrophosphate moieties to form squalene, which is the precursor of all steroids. Squalene synthase is crucial for balancing the incorporation of farnesyl diphosphate (FPP) into sterol and nonsterol isoprene synthesis. Secondly, squalene is converted into lanosterol by the consecutive action of the squalene epoxidase ERG1 and the lanosterol synthase ERG7. Then, the delta(24)-sterol C-methyltransferase ERG6 methylates lanosterol at C-24 to produce eburicol. Eburicol is the substrate of the sterol 14-alpha demethylase encoded by CYP51A, CYP51B and CYP51C, to yield 4,4,24-trimethyl ergosta-8,14,24(28)-trienol. CYP51B encodes the enzyme primarily responsible for sterol 14-alpha-demethylation, and plays an essential role in ascospore formation. CYP51A encodes an additional sterol 14-alpha-demethylase, induced on ergosterol depletion and responsible for the intrinsic variation in azole sensitivity. The third CYP51 isoform, CYP51C, does not encode a sterol 14-alpha-demethylase, but is required for full virulence on host wheat ears. The C-14 reductase ERG24 then reduces the C14=C15 double bond which leads to 4,4-dimethylfecosterol. A sequence of further demethylations at C-4, involving the C-4 demethylation complex containing the C-4 methylsterol oxidases ERG25, the sterol-4-alpha-carboxylate 3-dehydrogenase ERG26 and the 3-keto-steroid reductase ERG27, leads to the production of fecosterol via 4-methylfecosterol. ERG28 has a role as a scaffold to help anchor ERG25, ERG26 and ERG27 to the endoplasmic reticulum. The C-8 sterol isomerase ERG2 then catalyzes the reaction which results in unsaturation at C-7 in the B ring of sterols and thus converts fecosterol to episterol. The sterol-C5-desaturases ERG3A and ERG3BB then catalyze the introduction of a C-5 double bond in the B ring to produce 5-dehydroepisterol. The C-22 sterol desaturases ERG5A and ERG5B further convert 5-dehydroepisterol into ergosta-5,7,22,24(28)-tetraen-3beta-ol by forming the C-22(23) double bond in the sterol side chain. Finally, ergosta-5,7,22,24(28)-tetraen-3beta-ol is substrate of the C-24(28) sterol reductase ERG4 to produce ergosterol. This Gibberella zeae (strain ATCC MYA-4620 / CBS 123657 / FGSC 9075 / NRRL 31084 / PH-1) (Wheat head blight fungus) protein is Sterol 24-C-methyltransferase ERG6B.